Here is a 335-residue protein sequence, read N- to C-terminus: NADH-quinone oxidoreductase subunit H (335 aa).

The next 8 helical transmembrane spans lie at 11 to 31 (VIIS…AGAL), 81 to 101 (VIFT…FAVI), 114 to 134 (IGLL…LFAG), 154 to 174 (VSYE…VGSF), 187 to 207 (LWFI…GVAV), 238 to 258 (FFVG…TLFF), 270 to 290 (QLAF…FILL), and 309 to 329 (FCLP…LLNT).

It belongs to the complex I subunit 1 family. In terms of assembly, NDH-1 is composed of 13 different subunits. Subunits NuoA, H, J, K, L, M, N constitute the membrane sector of the complex.

The protein localises to the cell inner membrane. It catalyses the reaction a quinone + NADH + 5 H(+)(in) = a quinol + NAD(+) + 4 H(+)(out). Its function is as follows. NDH-1 shuttles electrons from NADH, via FMN and iron-sulfur (Fe-S) centers, to quinones in the respiratory chain. The immediate electron acceptor for the enzyme in this species is believed to be ubiquinone. Couples the redox reaction to proton translocation (for every two electrons transferred, four hydrogen ions are translocated across the cytoplasmic membrane), and thus conserves the redox energy in a proton gradient. This subunit may bind ubiquinone. The sequence is that of NADH-quinone oxidoreductase subunit H from Pseudomonas fluorescens (strain SBW25).